A 148-amino-acid chain; its full sequence is Protein-export protein SecB (148 aa).

This sequence belongs to the SecB family. Homotetramer, a dimer of dimers. One homotetramer interacts with 1 SecA dimer.

It is found in the cytoplasm. In terms of biological role, one of the proteins required for the normal export of preproteins out of the cell cytoplasm. It is a molecular chaperone that binds to a subset of precursor proteins, maintaining them in a translocation-competent state. It also specifically binds to its receptor SecA. This is Protein-export protein SecB from Psychrobacter arcticus (strain DSM 17307 / VKM B-2377 / 273-4).